Reading from the N-terminus, the 250-residue chain is Ribosomal RNA small subunit methyltransferase J (250 aa).

S-adenosyl-L-methionine contacts are provided by residues 101-102 (RD), 117-118 (ER), 153-154 (SS), and Asp171.

Belongs to the methyltransferase superfamily. RsmJ family.

It localises to the cytoplasm. It catalyses the reaction guanosine(1516) in 16S rRNA + S-adenosyl-L-methionine = N(2)-methylguanosine(1516) in 16S rRNA + S-adenosyl-L-homocysteine + H(+). In terms of biological role, specifically methylates the guanosine in position 1516 of 16S rRNA. The polypeptide is Ribosomal RNA small subunit methyltransferase J (Escherichia coli O81 (strain ED1a)).